The sequence spans 399 residues: MTTAVEATAQVVEAFGKPHVNVGTIGHVDHGKTTLTAAITKHYGNFVAYDQIDKAPEERKRGITIATAHVEYQTEKRHYAHVDCPGHADYVKNMIVGAAQMDAAILVVSGVDGPMPQTREHILLAKQVGVGYIVVYINKADVSDPDMIGLVEMEVRELLSKYGFPGDEVPVVIGSALKALEDDDGEYGKKSIDKLMERLDDYVEVPPRSVDLPFLLPIEDVFSISGRGTVVTGRIEKGEIKIGDEIEIIGLKATQKTTCTGVEMFKKLLEKGSAGLNVGILLRGTKREEVERGQVLAKPGTITPHRKFKAEVYILKKEEGGRHTPFFANYQPQFYLRTTDVTGSIKLLEGKEMVMPGDNVSIEVELQVPIAMDKGLRFAIREGGRTVGSGVVSEILEWV.

The tr-type G domain occupies 17-208 (KPHVNVGTIG…LDDYVEVPPR (192 aa)). The segment at 26-33 (GHVDHGKT) is G1. Residue 26–33 (GHVDHGKT) coordinates GTP. Mg(2+) is bound at residue threonine 33. Residues 62–66 (GITIA) form a G2 region. The segment at 83–86 (DCPG) is G3. GTP-binding positions include 83 to 87 (DCPGH) and 138 to 141 (NKAD). Residues 138–141 (NKAD) are G4. Positions 175-177 (SAL) are G5.

This sequence belongs to the TRAFAC class translation factor GTPase superfamily. Classic translation factor GTPase family. EF-Tu/EF-1A subfamily. As to quaternary structure, monomer.

It localises to the cytoplasm. It carries out the reaction GTP + H2O = GDP + phosphate + H(+). In terms of biological role, GTP hydrolase that promotes the GTP-dependent binding of aminoacyl-tRNA to the A-site of ribosomes during protein biosynthesis. The chain is Elongation factor Tu 1 from Wolbachia sp. subsp. Brugia malayi (strain TRS).